Here is a 274-residue protein sequence, read N- to C-terminus: Energy-coupling factor transporter ATP-binding protein EcfA1 (274 aa).

Positions 9–240 (CSFINVAFSY…EQELQKIRLD (232 aa)) constitute an ABC transporter domain. An ATP-binding site is contributed by 41–48 (GHNGSGKS).

It belongs to the ABC transporter superfamily. Energy-coupling factor EcfA family. Forms a stable energy-coupling factor (ECF) transporter complex composed of 2 membrane-embedded substrate-binding proteins (S component), 2 ATP-binding proteins (A component) and 2 transmembrane proteins (T component).

The protein resides in the cell membrane. Functionally, ATP-binding (A) component of a common energy-coupling factor (ECF) ABC-transporter complex. Unlike classic ABC transporters this ECF transporter provides the energy necessary to transport a number of different substrates. In Mycoplasma genitalium (strain ATCC 33530 / DSM 19775 / NCTC 10195 / G37) (Mycoplasmoides genitalium), this protein is Energy-coupling factor transporter ATP-binding protein EcfA1.